The following is a 149-amino-acid chain: MVVEANCEIPENLYYYIDGKNTVWVKIEGSDIAVVGITDLAQTMAGKIVKIRIKKKGIKVERGRPVATLESGKWAGPVPAPVSGEVVDSNSEVEKSPVILNRDPYGQGWIAKIKISNQEEVKQLLTGQQAIQKLKEIITSEKLTCKRLQ.

The Lipoyl-binding domain occupies I32–K114. K73 bears the N6-lipoyllysine mark.

Belongs to the GcvH family. In terms of assembly, the glycine cleavage system is composed of four proteins: P, T, L and H. (R)-lipoate is required as a cofactor.

In terms of biological role, the glycine cleavage system catalyzes the degradation of glycine. The H protein shuttles the methylamine group of glycine from the P protein to the T protein. In Sulfolobus acidocaldarius (strain ATCC 33909 / DSM 639 / JCM 8929 / NBRC 15157 / NCIMB 11770), this protein is Probable glycine cleavage system H protein 2.